The primary structure comprises 58 residues: Large ribosomal subunit protein uL30 (58 aa).

It belongs to the universal ribosomal protein uL30 family. In terms of assembly, part of the 50S ribosomal subunit.

The protein is Large ribosomal subunit protein uL30 of Buchnera aphidicola subsp. Baizongia pistaciae (strain Bp).